A 206-amino-acid chain; its full sequence is Small ribosomal subunit protein uS3 (206 aa).

Positions 39–107 (IRSYINESFK…SVEVNVVGVK (69 aa)) constitute a KH type-2 domain.

Belongs to the universal ribosomal protein uS3 family. In terms of assembly, part of the 30S ribosomal subunit. Forms a tight complex with proteins S10 and S14.

Functionally, binds the lower part of the 30S subunit head. Binds mRNA in the 70S ribosome, positioning it for translation. The polypeptide is Small ribosomal subunit protein uS3 (Wolbachia pipientis subsp. Culex pipiens (strain wPip)).